Here is an 819-residue protein sequence, read N- to C-terminus: Aminopeptidase O (819 aa).

His-479 is a binding site for Zn(2+). Residue Glu-480 is the Proton acceptor of the active site. His-483 and Glu-502 together coordinate Zn(2+). Positions 689–699 (RRPRKRKRREK) match the Nucleolar localization signal motif.

This sequence belongs to the peptidase M1 family. Requires Zn(2+) as cofactor.

Its subcellular location is the nucleus. The protein resides in the nucleolus. It localises to the cytoplasm. Its function is as follows. Aminopeptidase which catalyzes the hydrolysis of amino acid residues from the N-terminus of peptide or protein substrates. In Homo sapiens (Human), this protein is Aminopeptidase O.